The primary structure comprises 312 residues: Putative tricarboxylate transport protein, mitochondrial (312 aa).

Solcar repeat units follow at residues 23–111 (EKTV…LKSQ), 122–208 (VMRL…LKDW), and 218–303 (ISKP…IIEF). 6 helical membrane-spanning segments follow: residues 29-49 (IVIG…TEYV), 75-95 (VNGH…YGSI), 126-146 (LCGL…METV), 164-184 (FVHG…YKGV), 221-241 (PIVG…NTPI), and 286-306 (VCLD…FLDV).

This sequence belongs to the mitochondrial carrier (TC 2.A.29) family.

The protein localises to the mitochondrion inner membrane. Functionally, transport of citrate across inner mitochondrial membrane. The protein is Putative tricarboxylate transport protein, mitochondrial of Caenorhabditis elegans.